The following is a 22-amino-acid chain: leu leader peptide (22 aa).

The segment at M1–S22 is disordered. Low complexity predominate over residues L11 to S22.

Involved in control of the biosynthesis of leucine. The polypeptide is leu leader peptide (leuL) (Corynebacterium glutamicum (strain ATCC 13032 / DSM 20300 / JCM 1318 / BCRC 11384 / CCUG 27702 / LMG 3730 / NBRC 12168 / NCIMB 10025 / NRRL B-2784 / 534)).